We begin with the raw amino-acid sequence, 520 residues long: GMP synthase [glutamine-hydrolyzing] (520 aa).

The Glutamine amidotransferase type-1 domain maps to 9–202 (TVLIVDFGSQ…VHNIAGIEGD (194 aa)). C86 acts as the Nucleophile in catalysis. Catalysis depends on residues H176 and E178. The 193-residue stretch at 203–395 (WTMRAYREHA…LGLPESFIGR (193 aa)) folds into the GMPS ATP-PPase domain. 230–236 (SGGVDSS) lines the ATP pocket.

In terms of assembly, homodimer.

It carries out the reaction XMP + L-glutamine + ATP + H2O = GMP + L-glutamate + AMP + diphosphate + 2 H(+). The protein operates within purine metabolism; GMP biosynthesis; GMP from XMP (L-Gln route): step 1/1. Its function is as follows. Catalyzes the synthesis of GMP from XMP. The chain is GMP synthase [glutamine-hydrolyzing] from Mesorhizobium japonicum (strain LMG 29417 / CECT 9101 / MAFF 303099) (Mesorhizobium loti (strain MAFF 303099)).